A 199-amino-acid chain; its full sequence is Cytosine-containing mismatch-binding protein 1 (199 aa).

The segment at residues 123–197 is a DNA-binding region (HMG box); it reads PKKPSSAFIL…QYDKFMKEAG (75 aa).

As to quaternary structure, monomer.

The protein localises to the nucleus. Functionally, binds to cytosines in base mismatches and opposite chemically altered guanines. May be involved in repair of DNA damage. The sequence is that of Cytosine-containing mismatch-binding protein 1 from Schizosaccharomyces pombe (strain 972 / ATCC 24843) (Fission yeast).